Consider the following 236-residue polypeptide: MKYKLLPCLLAILLTGCDRTEVTLSFTPEMASFSNEFDFDPLRGPVKDFTQTLMDEQGEVTKRVSGTLSEEGCFDSLELLDLENNTVVALVLDANYYRDAETLEKRVRLQGKCQLAELPSAGVSWETDDNGFVIKASSKQMQMEYRYDDQGYPLGKTTKSNDKTLSVSATPSTDPIKKLDYTAVTLLNNQRVGNVKQSCEYDNHANPVDCQLIIVDEGVKPAVERVYTIKNTIDYY.

The first 16 residues, 1 to 16, serve as a signal peptide directing secretion; the sequence is MKYKLLPCLLAILLTG. Cysteine 17 carries the N-palmitoyl cysteine lipid modification. The S-diacylglycerol cysteine moiety is linked to residue cysteine 17.

This sequence belongs to the UPF0257 family.

The protein localises to the cell membrane. This chain is UPF0257 lipoprotein YnfC, found in Escherichia coli O81 (strain ED1a).